Here is a 715-residue protein sequence, read N- to C-terminus: Nucleolar protein 9 (715 aa).

Positions 1–52 (MPKPRGRRVQSAFKERVENSEATHENSIAETGSDVEISLHEDQPQTSDNKNQ) are disordered. Positions 13 to 24 (FKERVENSEATH) are enriched in basic and acidic residues. 8 Pumilio repeats span residues 99–134 (ESRGKELKLVTNQICSKLMERLVLLASDRQLKHIFH), 135–170 (QFLGHFPALAHHKYSSHVLETLLVRSAALIEKEIVN), 206–243 (QLEPYWSSMIQHQYASHVMRIIILIVSGKELPSSTMAN), 291–326 (LDTKSARSLAIHKVASPVLQLIIRVEGIVDKERSVW), 340–377 (SEEAFVEYLLSDSVGSHFLEAIIKNDGARMKYIERLYR), 379–415 (YMKDRVLKLARRATTGVYIIQALLLKLKPGEVEHILD), 531–568 (LPQERLMQMCFHGVFSHVIEHALVVKPASEGEPKEVLI), and 575–613 (NLFQGKIFELACNSYGSHIVDKLWDFTVLLPMYKDRIAS). Basic and acidic residues predominate over residues 688-698 (YQEERAKREGE). Positions 688–715 (YQEERAKREGEDLAGSNQKRMKGRGRNR) are disordered. Residues 706–715 (KRMKGRGRNR) are compositionally biased toward basic residues.

This sequence belongs to the NOP9 family.

It is found in the nucleus. The protein localises to the nucleolus. RNA-binding nucleolar protein required for pre-rRNA processing. Involved in production of 18S rRNA and assembly of small ribosomal subunit. The sequence is that of Nucleolar protein 9 (NOP9) from Clavispora lusitaniae (strain ATCC 42720) (Yeast).